A 227-amino-acid chain; its full sequence is Ribosomal RNA small subunit methyltransferase G (227 aa).

S-adenosyl-L-methionine-binding positions include G81, L86, 131–132 (AE), and R149.

Belongs to the methyltransferase superfamily. RNA methyltransferase RsmG family.

The protein localises to the cytoplasm. In terms of biological role, specifically methylates the N7 position of guanine in position 518 of 16S rRNA. The sequence is that of Ribosomal RNA small subunit methyltransferase G from Rhodococcus jostii (strain RHA1).